The following is a 709-amino-acid chain: Ribosomal RNA large subunit methyltransferase K/L (709 aa).

The 112-residue stretch at 43 to 154 folds into the THUMP domain; sequence LAYRITLWTR…NGVITIAMNF (112 aa).

Belongs to the methyltransferase superfamily. RlmKL family.

Its subcellular location is the cytoplasm. It catalyses the reaction guanosine(2445) in 23S rRNA + S-adenosyl-L-methionine = N(2)-methylguanosine(2445) in 23S rRNA + S-adenosyl-L-homocysteine + H(+). The enzyme catalyses guanosine(2069) in 23S rRNA + S-adenosyl-L-methionine = N(2)-methylguanosine(2069) in 23S rRNA + S-adenosyl-L-homocysteine + H(+). Functionally, specifically methylates the guanine in position 2445 (m2G2445) and the guanine in position 2069 (m7G2069) of 23S rRNA. This chain is Ribosomal RNA large subunit methyltransferase K/L, found in Shewanella baltica (strain OS185).